We begin with the raw amino-acid sequence, 36 residues long: Glucagon-1 (36 aa).

Belongs to the glucagon family.

It is found in the secreted. Promotes hydrolysis of glycogen and lipids, and raises the blood sugar level. This chain is Glucagon-1 (gcg1), found in Oreochromis niloticus (Nile tilapia).